Reading from the N-terminus, the 325-residue chain is UPF0285 protein Mbar_A0208 (325 aa).

The protein belongs to the UPF0285 family.

The protein is UPF0285 protein Mbar_A0208 of Methanosarcina barkeri (strain Fusaro / DSM 804).